We begin with the raw amino-acid sequence, 47 residues long: Exoenzymes regulatory protein AepH (47 aa).

Composition is skewed to basic and acidic residues over residues 1 to 17 (MGQE…QDGH) and 33 to 47 (TKKE…DANV). The segment at 1 to 47 (MGQEPKGIESRKIQDGHVRKKVGRQQGLWVRTTKKEKFSRMSRDANV) is disordered.

Involved in the control of extracellular enzymes production. Stimulates PEL, PEH, CEL, and PRT production. The sequence is that of Exoenzymes regulatory protein AepH (aepH) from Pectobacterium carotovorum subsp. carotovorum (Erwinia carotovora subsp. carotovora).